We begin with the raw amino-acid sequence, 183 residues long: Holliday junction branch migration complex subunit RuvA (183 aa).

Residues 1 to 63 (MIVGLIGVVE…EDAHLLYGFL (63 aa)) form a domain I region. The tract at residues 64 to 139 (EESEKILFER…FFIQDENRPA (76 aa)) is domain II. Alanine 139 is a region of interest (flexible linker). A domain III region spans residues 139–183 (ARNEVFLALESLGFKSAEINPVLKTLKPHLSIEAAIKEALQQLRS).

Belongs to the RuvA family. In terms of assembly, homotetramer. Forms an RuvA(8)-RuvB(12)-Holliday junction (HJ) complex. HJ DNA is sandwiched between 2 RuvA tetramers; dsDNA enters through RuvA and exits via RuvB. An RuvB hexamer assembles on each DNA strand where it exits the tetramer. Each RuvB hexamer is contacted by two RuvA subunits (via domain III) on 2 adjacent RuvB subunits; this complex drives branch migration. In the full resolvosome a probable DNA-RuvA(4)-RuvB(12)-RuvC(2) complex forms which resolves the HJ.

It is found in the cytoplasm. Functionally, the RuvA-RuvB-RuvC complex processes Holliday junction (HJ) DNA during genetic recombination and DNA repair, while the RuvA-RuvB complex plays an important role in the rescue of blocked DNA replication forks via replication fork reversal (RFR). RuvA specifically binds to HJ cruciform DNA, conferring on it an open structure. The RuvB hexamer acts as an ATP-dependent pump, pulling dsDNA into and through the RuvAB complex. HJ branch migration allows RuvC to scan DNA until it finds its consensus sequence, where it cleaves and resolves the cruciform DNA. The protein is Holliday junction branch migration complex subunit RuvA of Helicobacter pylori (strain J99 / ATCC 700824) (Campylobacter pylori J99).